Here is a 205-residue protein sequence, read N- to C-terminus: Holliday junction branch migration complex subunit RuvA (205 aa).

The domain I stretch occupies residues 1-64 (MIGKLKGVID…EDQIKLFGFR (64 aa)). The interval 65–143 (TDHEREWFRL…SFANVDPTVV (79 aa)) is domain II. The interval 144–154 (HLAGDLDDQRA) is flexible linker. The interval 154–205 (APRPVRDAISALVNLGYGQPQATAAIAAASRGAGENAETAQLIRLGLKELSK) is domain III.

It belongs to the RuvA family. As to quaternary structure, homotetramer. Forms an RuvA(8)-RuvB(12)-Holliday junction (HJ) complex. HJ DNA is sandwiched between 2 RuvA tetramers; dsDNA enters through RuvA and exits via RuvB. An RuvB hexamer assembles on each DNA strand where it exits the tetramer. Each RuvB hexamer is contacted by two RuvA subunits (via domain III) on 2 adjacent RuvB subunits; this complex drives branch migration. In the full resolvosome a probable DNA-RuvA(4)-RuvB(12)-RuvC(2) complex forms which resolves the HJ.

The protein resides in the cytoplasm. Its function is as follows. The RuvA-RuvB-RuvC complex processes Holliday junction (HJ) DNA during genetic recombination and DNA repair, while the RuvA-RuvB complex plays an important role in the rescue of blocked DNA replication forks via replication fork reversal (RFR). RuvA specifically binds to HJ cruciform DNA, conferring on it an open structure. The RuvB hexamer acts as an ATP-dependent pump, pulling dsDNA into and through the RuvAB complex. HJ branch migration allows RuvC to scan DNA until it finds its consensus sequence, where it cleaves and resolves the cruciform DNA. The chain is Holliday junction branch migration complex subunit RuvA from Nitrobacter winogradskyi (strain ATCC 25391 / DSM 10237 / CIP 104748 / NCIMB 11846 / Nb-255).